A 401-amino-acid chain; its full sequence is Methionyl-tRNA formyltransferase, mitochondrial (401 aa).

Residues 1–26 constitute a mitochondrion transit peptide; that stretch reads MVKMRRITPTRLLFTCRYISNNASPP. Residues 18 to 20 and 66 to 70 contribute to the (6R)-10-formyltetrahydrofolate site; these read YIS and VVTRS.

The protein belongs to the Fmt family. In terms of processing, phosphorylated by GCN2 in response to nutrient deprivation. Phosphorylation mediates retention of FMT1 in the cytoplasm.

The protein localises to the mitochondrion. It localises to the mitochondrion matrix. It is found in the cytoplasm. It carries out the reaction L-methionyl-tRNA(fMet) + (6R)-10-formyltetrahydrofolate = N-formyl-L-methionyl-tRNA(fMet) + (6S)-5,6,7,8-tetrahydrofolate + H(+). In terms of biological role, formylates methionyl-tRNA in mitochondria and the cytoplasm. Responsible for the formylation of the 8 N-terminally formylated (Nt-formylated) mitochondrial matrix proteins that are encoded by mitochondrial DNA. Nt-formylated proteins in the cytoplasm are strongly up-regulated in stationary phase or upon starvation for specific amino acids (His or Lys) and are targeted for degradation by a PSH1 E3 ubiquitin ligase-mediated fMet/N-end rule pathway. Increased Nt-formylation of cytosolic proteins appears to be important for adaptation to these stresses. Stationary phase-degraded Nt-formylated proteins include histone H3-like centromeric protein CSE4, Mediator complex subunit 3 (PGD1) and small ribosomal subunit protein uS8-A (RPS22A). In Saccharomyces cerevisiae (strain ATCC 204508 / S288c) (Baker's yeast), this protein is Methionyl-tRNA formyltransferase, mitochondrial (FMT1).